We begin with the raw amino-acid sequence, 319 residues long: Thymidylate synthase (319 aa).

Residues Arg25 and 181-182 each bind dUMP; that span reads RR. Cys201 functions as the Nucleophile in the catalytic mechanism. DUMP-binding positions include 221–224, Asn232, and 262–264; these read RSAD and HIY. Asp224 serves as a coordination point for (6R)-5,10-methylene-5,6,7,8-tetrahydrofolate. Ala318 contacts (6R)-5,10-methylene-5,6,7,8-tetrahydrofolate.

It belongs to the thymidylate synthase family. Bacterial-type ThyA subfamily. In terms of assembly, homodimer.

Its subcellular location is the cytoplasm. It carries out the reaction dUMP + (6R)-5,10-methylene-5,6,7,8-tetrahydrofolate = 7,8-dihydrofolate + dTMP. The protein operates within pyrimidine metabolism; dTTP biosynthesis. Its function is as follows. Catalyzes the reductive methylation of 2'-deoxyuridine-5'-monophosphate (dUMP) to 2'-deoxythymidine-5'-monophosphate (dTMP) while utilizing 5,10-methylenetetrahydrofolate (mTHF) as the methyl donor and reductant in the reaction, yielding dihydrofolate (DHF) as a by-product. This enzymatic reaction provides an intracellular de novo source of dTMP, an essential precursor for DNA biosynthesis. The chain is Thymidylate synthase from Oenococcus oeni (strain ATCC BAA-331 / PSU-1).